The primary structure comprises 458 residues: MSFDLKNDISKKIHFIGIGGVSMSGLAEILLERGFKVSGSDMNGSPMIDKLKEHGAEIYLGHNEKNINNVDIVVYTAAIPEDNPELIYARKNNISLMTRAEFLGSLMKGHKYNIAISGTHGKTTTTSMVSHIALTEDVDPTILVGGNLDIINGNVLAGKSDYFITEACEYKASFLEFYPYIGVILNIDADHLDYYKNIDDIENTFAKFVNLIPKEGYLIANADDKRVARVASNATCNVVSFGIDNGDIRAKNISFNESGFSSFDVYKSSELLFNIELNVPGKHNILNALSAIASALTLKISHKSIIDGLKSFKGTHRRFEIKGVKNGITVIDDYAHHPTEIKATLDAAKNYPHNKIYCVFQPHTYSRTLSLFDDFSNSFSGVDELVLADIYAAREKDTGVVSSLKLSEAINKNGVKSSNLHSFEDIVNYFKSKLNDGDILLTVGAGDVFKIGEMFLSK.

ATP is bound at residue 118–124; the sequence is GTHGKTT.

This sequence belongs to the MurCDEF family.

Its subcellular location is the cytoplasm. It catalyses the reaction UDP-N-acetyl-alpha-D-muramate + L-alanine + ATP = UDP-N-acetyl-alpha-D-muramoyl-L-alanine + ADP + phosphate + H(+). It functions in the pathway cell wall biogenesis; peptidoglycan biosynthesis. Functionally, cell wall formation. The sequence is that of UDP-N-acetylmuramate--L-alanine ligase from Clostridium acetobutylicum (strain ATCC 824 / DSM 792 / JCM 1419 / IAM 19013 / LMG 5710 / NBRC 13948 / NRRL B-527 / VKM B-1787 / 2291 / W).